Here is an 86-residue protein sequence, read N- to C-terminus: Acyl-CoA-binding protein homolog (86 aa).

An ACB domain is found at 2–86 (VSEQFNAAAE…FVEGLVAKYA (85 aa)). An acyl-CoA-binding positions include K14, 29–33 (YALFK), K51, K55, and Y74.

The protein belongs to the ACBP family. In terms of tissue distribution, expressed in larval and pupal brains. In adults, expressed in cardia, part of the Malpighian tubules, fat body, and gametes of both sexes.

Binds medium- and long-chain acyl-CoA esters with very high affinity and may function as an intracellular carrier of acyl-CoA esters. May be involved in energy metabolism in a manner that depends on the substrate used for energy production. Dbi and its metabolites are involved in the regulation of multiple biological processes. In Drosophila melanogaster (Fruit fly), this protein is Acyl-CoA-binding protein homolog.